The following is a 210-amino-acid chain: Ribosomal RNA large subunit methyltransferase E (210 aa).

S-adenosyl-L-methionine is bound by residues Gly-60, Trp-62, Asp-80, Asp-96, and Asp-121. Residue Lys-161 is the Proton acceptor of the active site.

Belongs to the class I-like SAM-binding methyltransferase superfamily. RNA methyltransferase RlmE family.

The protein resides in the cytoplasm. It catalyses the reaction uridine(2552) in 23S rRNA + S-adenosyl-L-methionine = 2'-O-methyluridine(2552) in 23S rRNA + S-adenosyl-L-homocysteine + H(+). Functionally, specifically methylates the uridine in position 2552 of 23S rRNA at the 2'-O position of the ribose in the fully assembled 50S ribosomal subunit. The polypeptide is Ribosomal RNA large subunit methyltransferase E (Vesicomyosocius okutanii subsp. Calyptogena okutanii (strain HA)).